Reading from the N-terminus, the 334-residue chain is MDDRMVDQSMHDEESSFELSLRPTKLRQYIGQSTIKSNLEVFIKAAKMRQEPLDHVLLFGPPGLGKTTLSNIIANEMEVNIRIISGPSIERPGDLAAILSSLQPGDVLFIDEIHRLSSVVEEVLYPAMEDFFLDIVIGKGEEARSIRIDLPPFTLIGATTRAGSLTAPLRDRFGVHLRLEYYQELELKEIIVRTAEVLGTSIDDESAIELAKRSRGTPRVANRLLKRVRDFQQVNEDELISIATTRASLQLLQVDDEGLDYIDHKMMNCILEQYKGGPVGLDTIAVSIGEERVTIEDVYEPFLIQKGFIERTPRGRKATPYAFEHFSKKNGKKE.

The tract at residues 1–182 is large ATPase domain (RuvB-L); it reads MDDRMVDQSM…FGVHLRLEYY (182 aa). ATP-binding positions include Leu21, Arg22, Gly63, Lys66, Thr67, Thr68, 129-131, Arg172, Tyr182, and Arg219; that span reads EDF. Thr67 is a binding site for Mg(2+). A small ATPAse domain (RuvB-S) region spans residues 183-253; sequence QELELKEIIV…TTRASLQLLQ (71 aa). Positions 256-334 are head domain (RuvB-H); it reads DEGLDYIDHK…HFSKKNGKKE (79 aa). Residues Arg292, Arg311, and Arg316 each contribute to the DNA site.

This sequence belongs to the RuvB family. As to quaternary structure, homohexamer. Forms an RuvA(8)-RuvB(12)-Holliday junction (HJ) complex. HJ DNA is sandwiched between 2 RuvA tetramers; dsDNA enters through RuvA and exits via RuvB. An RuvB hexamer assembles on each DNA strand where it exits the tetramer. Each RuvB hexamer is contacted by two RuvA subunits (via domain III) on 2 adjacent RuvB subunits; this complex drives branch migration. In the full resolvosome a probable DNA-RuvA(4)-RuvB(12)-RuvC(2) complex forms which resolves the HJ.

It is found in the cytoplasm. It carries out the reaction ATP + H2O = ADP + phosphate + H(+). Its function is as follows. The RuvA-RuvB-RuvC complex processes Holliday junction (HJ) DNA during genetic recombination and DNA repair, while the RuvA-RuvB complex plays an important role in the rescue of blocked DNA replication forks via replication fork reversal (RFR). RuvA specifically binds to HJ cruciform DNA, conferring on it an open structure. The RuvB hexamer acts as an ATP-dependent pump, pulling dsDNA into and through the RuvAB complex. RuvB forms 2 homohexamers on either side of HJ DNA bound by 1 or 2 RuvA tetramers; 4 subunits per hexamer contact DNA at a time. Coordinated motions by a converter formed by DNA-disengaged RuvB subunits stimulates ATP hydrolysis and nucleotide exchange. Immobilization of the converter enables RuvB to convert the ATP-contained energy into a lever motion, pulling 2 nucleotides of DNA out of the RuvA tetramer per ATP hydrolyzed, thus driving DNA branch migration. The RuvB motors rotate together with the DNA substrate, which together with the progressing nucleotide cycle form the mechanistic basis for DNA recombination by continuous HJ branch migration. Branch migration allows RuvC to scan DNA until it finds its consensus sequence, where it cleaves and resolves cruciform DNA. This is Holliday junction branch migration complex subunit RuvB from Staphylococcus saprophyticus subsp. saprophyticus (strain ATCC 15305 / DSM 20229 / NCIMB 8711 / NCTC 7292 / S-41).